Consider the following 1040-residue polypeptide: Kinesin-like protein KIN-14H (1040 aa).

The Calponin-homology (CH) domain occupies Asp-54 to Glu-176. Positions Ser-208 to Thr-242 are disordered. Polar residues predominate over residues Val-215–Thr-242. The Kinesin motor domain maps to Ser-434 to Val-754. Gly-517–Thr-524 provides a ligand contact to ATP. Residues Val-761–Arg-796 adopt a coiled-coil conformation. Residues Leu-809–Ser-818 show a composition bias toward low complexity. Disordered stretches follow at residues Leu-809–Glu-871, Glu-887–Ser-926, and Met-969–Lys-1040. Residues Ile-840 to Asp-851 are compositionally biased toward polar residues. Residues Glu-887–Lys-923 show a composition bias toward basic and acidic residues. Residues Ser-1018–Val-1031 are compositionally biased toward polar residues.

This sequence belongs to the TRAFAC class myosin-kinesin ATPase superfamily. Kinesin family. KIN-14 subfamily.

The chain is Kinesin-like protein KIN-14H from Arabidopsis thaliana (Mouse-ear cress).